A 100-amino-acid chain; its full sequence is Large ribosomal subunit protein uL23 (100 aa).

It belongs to the universal ribosomal protein uL23 family. In terms of assembly, part of the 50S ribosomal subunit. Contacts protein L29, and trigger factor when it is bound to the ribosome.

In terms of biological role, one of the early assembly proteins it binds 23S rRNA. One of the proteins that surrounds the polypeptide exit tunnel on the outside of the ribosome. Forms the main docking site for trigger factor binding to the ribosome. The protein is Large ribosomal subunit protein uL23 of Yersinia enterocolitica serotype O:8 / biotype 1B (strain NCTC 13174 / 8081).